The chain runs to 385 residues: Probable endopeptidase MT2245 (385 aa).

The span at Ala235–Gly257 shows a compositional bias: pro residues. The interval Ala235 to Gly268 is disordered. In terms of domain architecture, NlpC/P60 spans Gly270–Tyr385. The active-site Nucleophile is Cys300. Catalysis depends on His348, which acts as the Proton acceptor. His360 is a catalytic residue.

It belongs to the peptidase C40 family.

In Mycobacterium tuberculosis (strain CDC 1551 / Oshkosh), this protein is Probable endopeptidase MT2245.